Consider the following 110-residue polypeptide: UPF0060 membrane protein AHA_2410 (110 aa).

The next 4 membrane-spanning stretches (helical) occupy residues 8 to 28 (GLFLVTALAEILGCYLPYLWL), 33 to 53 (SVWLLLPAGLSLMLFAWLLSL), 63 to 83 (AAYGGVYIFVAILWLWLVDGI), and 87 to 107 (LWDLVGSLVALCGMAIIMFAP).

This sequence belongs to the UPF0060 family.

It is found in the cell inner membrane. The polypeptide is UPF0060 membrane protein AHA_2410 (Aeromonas hydrophila subsp. hydrophila (strain ATCC 7966 / DSM 30187 / BCRC 13018 / CCUG 14551 / JCM 1027 / KCTC 2358 / NCIMB 9240 / NCTC 8049)).